We begin with the raw amino-acid sequence, 231 residues long: 7-cyano-7-deazaguanine synthase (231 aa).

8–18 (FSGGQDSTTCL) serves as a coordination point for ATP. 4 residues coordinate Zn(2+): Cys-188, Cys-197, Cys-200, and Cys-203.

It belongs to the QueC family. It depends on Zn(2+) as a cofactor.

The catalysed reaction is 7-carboxy-7-deazaguanine + NH4(+) + ATP = 7-cyano-7-deazaguanine + ADP + phosphate + H2O + H(+). Its pathway is purine metabolism; 7-cyano-7-deazaguanine biosynthesis. Its function is as follows. Catalyzes the ATP-dependent conversion of 7-carboxy-7-deazaguanine (CDG) to 7-cyano-7-deazaguanine (preQ(0)). This chain is 7-cyano-7-deazaguanine synthase, found in Salmonella gallinarum (strain 287/91 / NCTC 13346).